A 1558-amino-acid chain; its full sequence is MIKNGTCPYWERDDLSECARREYIEFKFPLFILLTGMIYAFCKVFRAFYLRGKNHTNEAPEFEEQGNGNHEYARFSVLRLKSAWESRSFCNVNNRSTFDKFKKFIEGAFIVLQLTIHLYILSSMPMDNKKFFHQGFLVQMFLWILLLVVITLRLISASQSFRWVLACKRDLWAVSFYSYASLFTLSILPLRSVFIGKIKDKIMVKYIISETFIDLALLLLLSTSSIEGTRYSFLVENENKKLPPAPTVFGLLTFSRIDRLIWKAYKHCLGNADIWDLDINNKSIAILANFEMSSKKGRLLPNIICYFKAVFISQLFLAFVSSFLNFVPSLLMPRILSYVNDPKSKSWNLVSLYVSSMLVSKIIATTCRGQGLFLGEKGTMQLRTVLISNIYSKTLRRTILKDSTTSLQKNASTSFEENPDSSEAEPRKKSSRKDNSVNNVMSIDAFKVSEAMNTFYLACEAVFMTVTALMILYSLLGWSAFAGTFALLAMIPLNFWCATFYGNYQADQLILTDKRTSGISEALNSIRVIKLLAWENLFYQKIINVRDGEIRLLKKKATIFFLNHLIWFFGPTLVSAITFSVFIKFQNQTLTPTIAFTALSLFAILRTPMDQIASTVSLLIQSFISLERIQDYLNESETRKYEILEQSNTKFGFEDASMEWEAAETSFKLKNISIDFKLNSLNAIIGPTGSGKSSLLLGLLGELNLLSGKIYVPTVESRDDLEIGKDGMTNSMAYCSQTPWLISGTIKDNVVFGEIFNKQKFDDVMKSCCLDKDIKAMTAGIRTDVGDGGFSLSGGQQQRIALARAIYSSSRYLILDDCLSAVDPETALYIYEECLCGPMMKGRTCIITSHNISLVTKRADWLVILDRGEVKSQGKPSDLIKSNEFLRESINNDSKNTTHNQIDLKRSTTSKKTKNGDPEGGNSQDEVCAEVENFEETKMEGSVKFSAYKWLADYFGGLGVVFVFTSSSILIHGITLSQGFWLRYWLDTGSSGSKSTWLYRIVEGHSNIYFLLTYIIIGLVSSFLTSGKVWIAIISGTNVTKKIFAKLLSSILYAKLRFHNVTPTGRIMNRFSKDMDIIDQQLIPNFEGLSYSVVVCLWIILLIGYVTPQFLLFAIPLCALYYTVCTLYLRASRELKRIDNINISPIHQLFAEAIKGVTTIRALADERRFITQSLVAIDRSNAPFFYLNMATEWITYRVDIIGTLVLFSSSVMIIMKASYLDAGLAGILLSNAFSFTETAQWIIKVFSSVELLMSSVERIKEYTDIPSESNGYISPPANWPQTGDVELKNLSLRYSPHSSKALDNVSFKVKAGTKVGIVGRTGAGKSSIIAAIYRLSDWENGTITIDNKDIKHIPLERLRNSISCIPQDPTLFDGTVRSNLDPFDRYSDVQIYGVLSKVGLIEECDELCLIFEQEQPNFSSHKLRNRFIDLNTVVKSGGSNLSQGQRQLLCLARSMLGARNIMLIDEATASIDYISDAKIQKTIRETMKNTTILTIAHRLRSVIDYDKILVMEMGRVKEYDHPYTLISDRNTIFYRLCRQSGEFENLFELAKVSFDNKR.

At 1 to 29 (MIKNGTCPYWERDDLSECARREYIEFKFP) the chain is on the extracellular side. Residue N4 is glycosylated (N-linked (GlcNAc...) asparagine). The chain crosses the membrane as a helical span at residues 30-50 (LFILLTGMIYAFCKVFRAFYL). The Cytoplasmic segment spans residues 51-103 (RGKNHTNEAPEFEEQGNGNHEYARFSVLRLKSAWESRSFCNVNNRSTFDKFKK). The helical transmembrane segment at 104 to 124 (FIEGAFIVLQLTIHLYILSSM) threads the bilayer. At 125 to 130 (PMDNKK) the chain is on the extracellular side. Residues 131–151 (FFHQGFLVQMFLWILLLVVIT) traverse the membrane as a helical segment. At 152–169 (LRLISASQSFRWVLACKR) the chain is on the cytoplasmic side. Residues 170–190 (DLWAVSFYSYASLFTLSILPL) form a helical membrane-spanning segment. Over 191-201 (RSVFIGKIKDK) the chain is Extracellular. A helical membrane pass occupies residues 202–222 (IMVKYIISETFIDLALLLLLS). Residues 223-302 (TSSIEGTRYS…SSKKGRLLPN (80 aa)) lie on the Cytoplasmic side of the membrane. A helical membrane pass occupies residues 303–323 (IICYFKAVFISQLFLAFVSSF). Positions 311-621 (FISQLFLAFV…IASTVSLLIQ (311 aa)) constitute an ABC transmembrane type-1 1 domain. The Extracellular portion of the chain corresponds to 324 to 351 (LNFVPSLLMPRILSYVNDPKSKSWNLVS). The helical transmembrane segment at 352–374 (LYVSSMLVSKIIATTCRGQGLFL) threads the bilayer. Residues 375–449 (GEKGTMQLRT…VMSIDAFKVS (75 aa)) lie on the Cytoplasmic side of the membrane. The disordered stretch occupies residues 410–434 (NASTSFEENPDSSEAEPRKKSSRKD). Residues 424-434 (AEPRKKSSRKD) are compositionally biased toward basic and acidic residues. Residues 450 to 470 (EAMNTFYLACEAVFMTVTALM) form a helical membrane-spanning segment. Residues 471–481 (ILYSLLGWSAF) are Extracellular-facing. A helical membrane pass occupies residues 482-504 (AGTFALLAMIPLNFWCATFYGNY). Topologically, residues 505–558 (QADQLILTDKRTSGISEALNSIRVIKLLAWENLFYQKIINVRDGEIRLLKKKAT) are cytoplasmic. Residues 559-579 (IFFLNHLIWFFGPTLVSAITF) traverse the membrane as a helical segment. At 580-584 (SVFIK) the chain is on the extracellular side. The helical transmembrane segment at 585–605 (FQNQTLTPTIAFTALSLFAIL) threads the bilayer. Over 606–953 (RTPMDQIAST…KFSAYKWLAD (348 aa)) the chain is Cytoplasmic. The ABC transporter 1 domain occupies 651–892 (FGFEDASMEW…NEFLRESINN (242 aa)). Residue 686-693 (GPTGSGKS) coordinates ATP. A compositionally biased stretch (polar residues) spans 892–901 (NDSKNTTHNQ). Residues 892–926 (NDSKNTTHNQIDLKRSTTSKKTKNGDPEGGNSQDE) are disordered. A helical membrane pass occupies residues 954–974 (YFGGLGVVFVFTSSSILIHGI). The region spanning 961 to 1251 (VFVFTSSSIL…IIKVFSSVEL (291 aa)) is the ABC transmembrane type-1 2 domain. Residues 975 to 1013 (TLSQGFWLRYWLDTGSSGSKSTWLYRIVEGHSNIYFLLT) are Extracellular-facing. A helical membrane pass occupies residues 1014 to 1034 (YIIIGLVSSFLTSGKVWIAII). Over 1035-1082 (SGTNVTKKIFAKLLSSILYAKLRFHNVTPTGRIMNRFSKDMDIIDQQL) the chain is Cytoplasmic. The helical transmembrane segment at 1083-1105 (IPNFEGLSYSVVVCLWIILLIGY) threads the bilayer. At 1106–1109 (VTPQ) the chain is on the extracellular side. The chain crosses the membrane as a helical span at residues 1110 to 1132 (FLLFAIPLCALYYTVCTLYLRAS). Residues 1133-1199 (RELKRIDNIN…ATEWITYRVD (67 aa)) are Cytoplasmic-facing. Residues 1200-1220 (IIGTLVLFSSSVMIIMKASYL) form a helical membrane-spanning segment. Topologically, residues 1221–1222 (DA) are extracellular. The chain crosses the membrane as a helical span at residues 1223–1243 (GLAGILLSNAFSFTETAQWII). Over 1244–1558 (KVFSSVELLM…LAKVSFDNKR (315 aa)) the chain is Cytoplasmic. Residues 1285 to 1538 (VELKNLSLRY…RNTIFYRLCR (254 aa)) enclose the ABC transporter 2 domain. 1319–1326 (GRTGAGKS) lines the ATP pocket.

This sequence belongs to the ABC transporter superfamily. ABCC family. Conjugate transporter (TC 3.A.1.208) subfamily.

It is found in the membrane. The chain is ABC transporter NFT1 (NFT1) from Saccharomyces cerevisiae (Baker's yeast).